Here is a 417-residue protein sequence, read N- to C-terminus: EKCIVGTGLERQAALDSGVLAIVEHEGKIIYTDTDKIILSGNGDTHSIPLVLYQRFNKNTCMHQNPRIPGGKCIKKGQILADGAATVGGELGLGKNVLVAYMPWEGYNFEDAVLISERLVYEDIYTSFHIRKYEIQTYVTSQGPERVTSEIPHLEAHLLRNLDKNGIVGLGSWVETGDILVGKLTPQMAKESSYAPEDRLLRAILGIQVSTSKETCLKLPIGGRGRVIDVRWIQKKGGSNYNPETIHIYILQKREIKVGDKVAGRHGNKGIISKILPRQDMPYLQDGRPVDMVFNPLGVPSRMNVGQIFECSLGLAGGLLDRHYRITPFDERYEHEASRKLVFSELYQASKQTAKPWIFEPEYPGKSRIFDGRTGDPFEQPVIIGNPYILKLIHQVDDKIHGRSSGHYALVTQQPLR.

This sequence belongs to the RNA polymerase beta chain family. In plastids the minimal PEP RNA polymerase catalytic core is composed of four subunits: alpha, beta, beta', and beta''. When a (nuclear-encoded) sigma factor is associated with the core the holoenzyme is formed, which can initiate transcription.

It is found in the plastid. Its subcellular location is the chloroplast. It carries out the reaction RNA(n) + a ribonucleoside 5'-triphosphate = RNA(n+1) + diphosphate. Functionally, DNA-dependent RNA polymerase catalyzes the transcription of DNA into RNA using the four ribonucleoside triphosphates as substrates. This Saponaria officinalis (Common soapwort) protein is DNA-directed RNA polymerase subunit beta (rpoB).